Here is a 97-residue protein sequence, read N- to C-terminus: UPF0235 protein HD_0778 (97 aa).

It belongs to the UPF0235 family.

This chain is UPF0235 protein HD_0778, found in Haemophilus ducreyi (strain 35000HP / ATCC 700724).